We begin with the raw amino-acid sequence, 304 residues long: MRLIFMGTPDFSVPALHALLDAGHEVVAVYTQPPRPAGRGKALRRSPVHEAAEAAGIEVRTPARVRRDTAEHEAFAALNADAAVVAAYGLILPKAMLDAPRLGCLNIHASLLPRWRGASPIQSAIVAGDSQSGVSIMQMDEGLDTGAVLLEEATPISATDTASTLHDRLSEIGGRLVVRALAEQPKPVPQPEDGVTYAERLTRDHGRIDWTRSAAEIDRQIRGLTPWPGAFTTLDDVVLKIGAATPLPAESHSAAPGTTLGESLTIACGTGALRIDRLQKPGRSMMSASDFLRGQPVPKGTRLV.

110-113 contacts (6S)-5,6,7,8-tetrahydrofolate; sequence SLLP.

The protein belongs to the Fmt family.

The enzyme catalyses L-methionyl-tRNA(fMet) + (6R)-10-formyltetrahydrofolate = N-formyl-L-methionyl-tRNA(fMet) + (6S)-5,6,7,8-tetrahydrofolate + H(+). Functionally, attaches a formyl group to the free amino group of methionyl-tRNA(fMet). The formyl group appears to play a dual role in the initiator identity of N-formylmethionyl-tRNA by promoting its recognition by IF2 and preventing the misappropriation of this tRNA by the elongation apparatus. The sequence is that of Methionyl-tRNA formyltransferase from Gluconobacter oxydans (strain 621H) (Gluconobacter suboxydans).